An 894-amino-acid polypeptide reads, in one-letter code: MTAIKHALQRDIFTPNDERLLSIVNVCKAGKKKKNCFLCATVTTERPVQVKVVKVKKSDKGDFYKRQIAWALRDLAVVDAKDAIKENPEFDLHFEKVYKWVASSTAEKNAFISCIWKLNQRYLRKKIDFVNVSSQLLEESVPSGENQSVAGGDEEAVDEYQELNAREEQDIEIMMEGCECAISNAEAFAEKLSRELQVLDGANIQSIMASEKQVNTLMQLLDEALTEVDQIELKLSSYEEMLQSVKEQMDQISESNHLIHLSNTNNVKLLSEIEFLVNHMDLAKGHIKALQEGDLVSSRGIEACTNAADALLQCMNVALRPGHDMLLAVKQQQQRFSDLREHFARRLASHLNNVFVQQGHDQSSTLAQHSVELTLPNHHPFHRDLLRYAKLMEWLKSTDYGKYEGLTKNYMDYLSRLYEREIKDFFEVAKMKMTGTSKESKKFATLPRKESAVKQETESLHGSSGKLTGSTSSLNKLSVQSSGSRRSQSSSLLDMGNMSASDLDVADRTKFDKIFEQVLSELEPLCLAEQDFISKFFKLQQHQNMSASMTEAEDLDGGSLLRQHSSGTLLPVSSEKDMIRQMMIKIFRCIEPELNNLIALGDKVDSFNSLYMLVKMSHHVWTAQNVDPASFLSTTLGNVLVTVKRNFDKCISNQIRQMEEVKISKKSKVGILPFVAEFEEFAGLAESIFKNAERRGDLDKAYTKLIRGVFINVEKVANESQKTPRDVVMMENFHHIFATLSRLKISCLEAEKKEAKQKYTDHLQSYVIYSLGQPLEKLNHFFEGVEARVAQGIREEEVSYQLAFNKQELRKVIKEYPGKEVKKGLDNLYKKVDKHLCEEENLLQVVWHSMQDEFIRQYKHFEGLIARCYPGSGVTMEFTIQDILDYCSSIAQSH.

Coiled coils occupy residues 152–199 and 205–259; these read GDEE…LQVL and QSIM…NHLI. A disordered region spans residues 437-495; that stretch reads SKESKKFATLPRKESAVKQETESLHGSSGKLTGSTSSLNKLSVQSSGSRRSQSSSLLDM. A compositionally biased stretch (basic and acidic residues) spans 438–459; sequence KESKKFATLPRKESAVKQETES. The span at 460–491 shows a compositional bias: low complexity; sequence LHGSSGKLTGSTSSLNKLSVQSSGSRRSQSSS. S470 carries the post-translational modification Phosphoserine. T471 carries the phosphothreonine modification. S473, S487, and S501 each carry phosphoserine.

It belongs to the SEC3 family. The exocyst complex is composed of EXOC1, EXOC2, EXOC3, EXOC4, EXOC5, EXOC6, EXOC7 and EXOC8. Interacts with EEF1A1. Interacts with SLC6A9; interaction increases the transporter capacity of SLC6A9 probably by promoting its insertion into the cell membrane.

The protein localises to the midbody. It localises to the midbody ring. It is found in the cytoplasm. The protein resides in the perinuclear region. Its subcellular location is the cell membrane. Functionally, component of the exocyst complex involved in the docking of exocytic vesicles with fusion sites on the plasma membrane. The protein is Exocyst complex component 1 (Exoc1) of Mus musculus (Mouse).